Consider the following 704-residue polypeptide: Serotransferrin (704 aa).

A signal peptide spans 1–19 (MRPAVRALLACAVLGLCLA). 2 consecutive Transferrin-like domains span residues 25 to 351 (VRWC…NLRE) and 364 to 689 (VKWC…NLRQ). 2 cysteine pairs are disulfide-bonded: cysteine 28/cysteine 66 and cysteine 38/cysteine 57. Arginine 42 bears the Dimethylated arginine mark. Residues aspartate 81 and tyrosine 113 each contribute to the Fe(3+) site. 5 disulfide bridges follow: cysteine 136/cysteine 217, cysteine 176/cysteine 192, cysteine 179/cysteine 200, cysteine 189/cysteine 202, and cysteine 250/cysteine 264. Hydrogencarbonate contacts are provided by threonine 138, arginine 142, alanine 144, and glycine 145. A Fe(3+)-binding site is contributed by tyrosine 211. Histidine 272 lines the Fe(3+) pocket. 11 disulfide bridges follow: cysteine 362/cysteine 622, cysteine 367/cysteine 399, cysteine 377/cysteine 390, cysteine 424/cysteine 699, cysteine 441/cysteine 663, cysteine 473/cysteine 549, cysteine 497/cysteine 690, cysteine 507/cysteine 521, cysteine 518/cysteine 532, cysteine 589/cysteine 603, and cysteine 641/cysteine 646. Residues aspartate 414 and tyrosine 449 each coordinate Fe(3+). Residues threonine 475, arginine 479, alanine 481, and glycine 482 each contribute to the hydrogencarbonate site. Asparagine 514 carries N-linked (GlcNAc...) asparagine glycosylation. Position 543 (tyrosine 543) interacts with Fe(3+). Histidine 611 lines the Fe(3+) pocket. Serine 691 is modified (phosphoserine).

This sequence belongs to the transferrin family. In terms of assembly, monomer. Part of a complex composed of SLC40A1/ferroportin, TF/transferrin and HEPH/hephaestin that transfers iron from cells to transferrin. Expressed by the liver and secreted in plasma.

The protein localises to the secreted. Transferrins are iron binding transport proteins which can bind two Fe(3+) ions in association with the binding of an anion, usually bicarbonate. It is responsible for the transport of iron from sites of absorption and heme degradation to those of storage and utilization. Serum transferrin may also have a further role in stimulating cell proliferation. This chain is Serotransferrin (TF), found in Bos taurus (Bovine).